The sequence spans 351 residues: Serine/threonine-protein kinase ZRK1 (351 aa).

The 288-residue stretch at 60–347 folds into the Protein kinase domain; it reads FDSSCFVSQD…KELKQIEASL (288 aa). ATP is bound by residues 66–74 and lysine 87; that span reads VSQDVYYKW. Aspartate 191 serves as the catalytic Proton acceptor.

Belongs to the protein kinase superfamily. Ser/Thr protein kinase family. ZRK subfamily. Component of a stable high-order oligomeric complex made of RKS1 and RPP13L4/ZAR1 which recruits Xanthomonas campestris effector XopAC/AvrAC-mediated uridylylated PBL2 in the presence of ATP to form a wheel-like pentameric resistosome; this complex triggers immunity toward X.campestris in vascular tissues. Interacts with RPP13L4/ZAR1 and uridylylated PBL2. As to expression, expressed at high levels in germinating seeds and at lower levels in adult leaves.

It carries out the reaction L-seryl-[protein] + ATP = O-phospho-L-seryl-[protein] + ADP + H(+). The enzyme catalyses L-threonyl-[protein] + ATP = O-phospho-L-threonyl-[protein] + ADP + H(+). In terms of biological role, serine/threonine-protein kinase that confers a broad-spectrum quantitative disease resistance (QDR) to the pathogenic biotrophic bacteria Xanthomonas campestris (e.g. pv. campestris (Xcc), pv. raphani, pv. armoriaceae and pv. incanae) by restricting bacterial spread to the vascular system from the infection site; X.campestris causes black rot disease in crops. Seems to not have any kinase activity. The sequence is that of Serine/threonine-protein kinase ZRK1 from Arabidopsis thaliana (Mouse-ear cress).